A 488-amino-acid chain; its full sequence is ATP synthase subunit beta (488 aa).

155 to 162 (GGAGVGKT) contacts ATP. Residues 467-488 (GFAPDDQNTDADEKPAAQAAAN) are disordered.

It belongs to the ATPase alpha/beta chains family. As to quaternary structure, F-type ATPases have 2 components, CF(1) - the catalytic core - and CF(0) - the membrane proton channel. CF(1) has five subunits: alpha(3), beta(3), gamma(1), delta(1), epsilon(1). CF(0) has three main subunits: a(1), b(2) and c(9-12). The alpha and beta chains form an alternating ring which encloses part of the gamma chain. CF(1) is attached to CF(0) by a central stalk formed by the gamma and epsilon chains, while a peripheral stalk is formed by the delta and b chains.

The protein localises to the cell membrane. It catalyses the reaction ATP + H2O + 4 H(+)(in) = ADP + phosphate + 5 H(+)(out). Produces ATP from ADP in the presence of a proton gradient across the membrane. The catalytic sites are hosted primarily by the beta subunits. The chain is ATP synthase subunit beta from Lacticaseibacillus casei (strain BL23) (Lactobacillus casei).